The chain runs to 457 residues: 5' exonuclease Apollo (457 aa).

Positions 425-437 (ELPKQYLLTPLNA) match the TBM motif.

It belongs to the DNA repair metallo-beta-lactamase (DRMBL) family. As to quaternary structure, interacts with TERF2; the interaction is direct.

Its subcellular location is the chromosome. The protein localises to the telomere. The protein resides in the nucleus. The enzyme catalyses a beta-lactam + H2O = a substituted beta-amino acid. Its function is as follows. 5'-3' exonuclease that plays a central role in telomere maintenance and protection during S-phase. Participates in the protection of telomeres against non-homologous end-joining (NHEJ)-mediated repair, thereby ensuring that telomeres do not fuse. Plays a key role in telomeric loop (T loop) formation by being recruited by TERF2 at the leading end telomeres and by processing leading-end telomeres immediately after their replication via its exonuclease activity: generates 3' single-stranded overhang at the leading end telomeres avoiding blunt leading-end telomeres that are vulnerable to end-joining reactions and expose the telomere end in a manner that activates the DNA repair pathways. May be required for DNA interstrand cross-link repair. Possesses beta-lactamase activity, catalyzing the hydrolysis of penicillin G and nitrocefin. Exhibits no activity towards other beta-lactam antibiotic classes including cephalosporins (cefotaxime) and carbapenems (imipenem). In Gallus gallus (Chicken), this protein is 5' exonuclease Apollo (DCLRE1B).